Here is a 20-residue protein sequence, read N- to C-terminus: Brevinin-1ITb (20 aa).

Met-8 bears the Methionine sulfoxide; partial mark. Cys-14 and Cys-20 are oxidised to a cystine.

It belongs to the frog skin active peptide (FSAP) family. Brevinin subfamily. As to expression, expressed by the skin glands.

It localises to the secreted. Its function is as follows. Antimicrobial peptide. This is Brevinin-1ITb from Rana italica (Italian stream frog).